A 357-amino-acid chain; its full sequence is SNF1-related protein kinase regulatory subunit gamma-like PV42b (357 aa).

4 consecutive CBS domains span residues 16-97 (MIDK…DGES), 113-185 (HCPE…SSQL), 198-273 (AIHN…WLPL), and 293-351 (STPG…ALLS).

This sequence belongs to the 5'-AMP-activated protein kinase gamma subunit family. In terms of tissue distribution, expressed highly in rosette leaves, cauline leaves, open flowers, developing siliques and dry seeds, but at a low level in stems and floral buds.

Plays redundant role with PV42a in regulating male gametogenesis and pollen tube guidance. This Arabidopsis thaliana (Mouse-ear cress) protein is SNF1-related protein kinase regulatory subunit gamma-like PV42b (PV42B).